The sequence spans 273 residues: Phosphate import ATP-binding protein PstB (273 aa).

The 243-residue stretch at 26 to 268 (MRGEKVCVFY…PTEKRTQDYI (243 aa)) folds into the ABC transporter domain. 58–65 (GPSGCGKS) lines the ATP pocket.

Belongs to the ABC transporter superfamily. Phosphate importer (TC 3.A.1.7) family. In terms of assembly, the complex is composed of two ATP-binding proteins (PstB), two transmembrane proteins (PstC and PstA) and a solute-binding protein (PstS).

Its subcellular location is the cell inner membrane. It carries out the reaction phosphate(out) + ATP + H2O = ADP + 2 phosphate(in) + H(+). Functionally, part of the ABC transporter complex PstSACB involved in phosphate import. Responsible for energy coupling to the transport system. This chain is Phosphate import ATP-binding protein PstB, found in Brucella abortus (strain 2308).